Consider the following 456-residue polypeptide: Rap guanine nucleotide exchange factor-like 1 (456 aa).

The region spanning 218-454 is the Ras-GEF domain; it reads EPEDVANHLT…FELSYKLEAN (237 aa).

In terms of biological role, probable guanine nucleotide exchange factor (GEF). This chain is Rap guanine nucleotide exchange factor-like 1 (RAPGEFL1), found in Pongo pygmaeus (Bornean orangutan).